The chain runs to 144 residues: Probable disulfide formation protein (144 aa).

Residues 10–29 form a helical membrane-spanning segment; that stretch reads WNLLLLTWLVALISTLSALF. C39 and C42 form a disulfide bridge. Transmembrane regions (helical) follow at residues 44–63 and 70–87; these read FQRAFMFPLTVILAIACYRS and YALPLTVIGAALAFVHTL. A disulfide bridge links C100 with C107. Residues 116–138 form a helical membrane-spanning segment; sequence GVVPLPALALFAFIIIAILLIII.

It belongs to the DsbB family. BdbC subfamily.

Its subcellular location is the cell inner membrane. Required for disulfide bond formation in some proteins. The protein is Probable disulfide formation protein of Metapseudomonas resinovorans (Pseudomonas resinovorans).